Reading from the N-terminus, the 434-residue chain is 4-hydroxy-3-methylbut-2-en-1-yl diphosphate synthase (flavodoxin) (434 aa).

Over residues 1–15 the composition is skewed to polar residues; it reads MQSEAQSPRSSQICS. The tract at residues 1-24 is disordered; the sequence is MQSEAQSPRSSQICSTEPVFGGHQ. [4Fe-4S] cluster-binding residues include C322, C325, C368, and E375.

Belongs to the IspG family. It depends on [4Fe-4S] cluster as a cofactor.

The enzyme catalyses (2E)-4-hydroxy-3-methylbut-2-enyl diphosphate + oxidized [flavodoxin] + H2O + 2 H(+) = 2-C-methyl-D-erythritol 2,4-cyclic diphosphate + reduced [flavodoxin]. It participates in isoprenoid biosynthesis; isopentenyl diphosphate biosynthesis via DXP pathway; isopentenyl diphosphate from 1-deoxy-D-xylulose 5-phosphate: step 5/6. Functionally, converts 2C-methyl-D-erythritol 2,4-cyclodiphosphate (ME-2,4cPP) into 1-hydroxy-2-methyl-2-(E)-butenyl 4-diphosphate. The protein is 4-hydroxy-3-methylbut-2-en-1-yl diphosphate synthase (flavodoxin) of Burkholderia cenocepacia (strain ATCC BAA-245 / DSM 16553 / LMG 16656 / NCTC 13227 / J2315 / CF5610) (Burkholderia cepacia (strain J2315)).